The following is a 691-amino-acid chain: Dynamin-1-like protein (691 aa).

In terms of domain architecture, Dynamin-type G spans 22 to 301; it reads IIQLPQIAVV…LMHHIRDCLP (280 aa). Residues 32–39 are G1 motif; sequence GTQSSGKS. 32–40 is a binding site for GTP; that stretch reads GTQSSGKSS. The tract at residues 58–60 is G2 motif; that stretch reads VTR. Residues 145–148 form a G3 motif region; that stretch reads DLPG. A G4 motif region spans residues 214–217; that stretch reads TKLD. GTP is bound by residues 214–220 and 245–248; these read TKLDLMD and NRSQ. The segment at 244–247 is G5 motif; the sequence is VNRS. A middle domain region spans residues 343–488; the sequence is YCNTIEGTAK…NEMVHNLVAI (146 aa). Composition is skewed to basic and acidic residues over residues 522–531 and 551–563; these read LPTSVPRDKM and KKGDEGQGEEKTK. Residues 522–573 form a disordered region; that stretch reads LPTSVPRDKMAGGAQAEQEGGTGTWRGMLKKGDEGQGEEKTKLQSSIPASPQ. Residues 599 to 690 form the GED domain; it reads CEVIERLIKS…VIAEIRETHL (92 aa). The segment at 609-623 is important for homodimerization; that stretch reads YFLIVRKNIQDSVPK.

The protein belongs to the TRAFAC class dynamin-like GTPase superfamily. Dynamin/Fzo/YdjA family. Homotetramer; dimerizes through the N-terminal GTP-middle region of one molecule binding to the GED domain of another DNM1L molecule. Oligomerizes in a GTP-dependent manner to form membrane-associated tubules with a spiral pattern.

It localises to the cytoplasm. It is found in the cytosol. The protein resides in the golgi apparatus. Its subcellular location is the endomembrane system. The protein localises to the mitochondrion outer membrane. It localises to the peroxisome. It is found in the membrane. The protein resides in the clathrin-coated pit. Its subcellular location is the cytoplasmic vesicle. The protein localises to the secretory vesicle. It localises to the synaptic vesicle membrane. The enzyme catalyses GTP + H2O = GDP + phosphate + H(+). Functions in mitochondrial and peroxisomal division. Mediates membrane fission through oligomerization into membrane-associated tubular structures that wrap around the scission site to constrict and sever the mitochondrial membrane through a GTP hydrolysis-dependent mechanism. The specific recruitment at scission sites is mediated by membrane receptors like MFF, MIEF1 and MIEF2 for mitochondrial membranes. While the recruitment by the membrane receptors is GTP-dependent, the following hydrolysis of GTP induces the dissociation from the receptors and allows DNM1L filaments to curl into closed rings that are probably sufficient to sever a double membrane. May play a role in the circadian control of mitochondrial ATP production. The chain is Dynamin-1-like protein from Danio rerio (Zebrafish).